The primary structure comprises 390 residues: Probable tRNA pseudouridine synthase D (390 aa).

Asp-93 serves as the catalytic Nucleophile. Residues 166 to 353 (YVLNYYGIQR…YGTRRKMITP (188 aa)) enclose the TRUD domain.

It belongs to the pseudouridine synthase TruD family.

It catalyses the reaction uridine(13) in tRNA = pseudouridine(13) in tRNA. In terms of biological role, could be responsible for synthesis of pseudouridine from uracil-13 in transfer RNAs. This chain is Probable tRNA pseudouridine synthase D, found in Methanococcus maripaludis (strain C5 / ATCC BAA-1333).